Here is a 217-residue protein sequence, read N- to C-terminus: Protein GrpE (217 aa).

A disordered region spans residues 1–63 (MAETSNSENK…AADSELSLQS (63 aa)). Over residues 10–32 (KTSEEAKASEKNSRSITLEETKL) the composition is skewed to basic and acidic residues. Residues 37–63 (SEESTQTTESTQAQAAEAADSELSLQS) are compositionally biased toward low complexity.

It belongs to the GrpE family. Homodimer.

The protein localises to the cytoplasm. Functionally, participates actively in the response to hyperosmotic and heat shock by preventing the aggregation of stress-denatured proteins, in association with DnaK and GrpE. It is the nucleotide exchange factor for DnaK and may function as a thermosensor. Unfolded proteins bind initially to DnaJ; upon interaction with the DnaJ-bound protein, DnaK hydrolyzes its bound ATP, resulting in the formation of a stable complex. GrpE releases ADP from DnaK; ATP binding to DnaK triggers the release of the substrate protein, thus completing the reaction cycle. Several rounds of ATP-dependent interactions between DnaJ, DnaK and GrpE are required for fully efficient folding. The protein is Protein GrpE of Leptospira borgpetersenii serovar Hardjo-bovis (strain JB197).